Consider the following 199-residue polypeptide: Transgelin-3 (199 aa).

The Calponin-homology (CH) domain occupies alanine 24–alanine 136. Phosphoserine is present on serine 163. One copy of the Calponin-like repeat lies at isoleucine 174–methionine 199. Positions methionine 178–glycine 188 are enriched in polar residues. The tract at residues methionine 178 to methionine 199 is disordered.

This sequence belongs to the calponin family.

In Mus musculus (Mouse), this protein is Transgelin-3 (Tagln3).